A 451-amino-acid chain; its full sequence is Prenyltransferase anuH (451 aa).

Residues Arg-105, Lys-189, Tyr-191, Lys-257, Tyr-259, and Tyr-422 each contribute to the dimethylallyl diphosphate site.

It belongs to the tryptophan dimethylallyltransferase family.

It carries out the reaction (8S)-annullatin E + dimethylallyl diphosphate = (8S)-annullatin J + diphosphate. Its pathway is secondary metabolite biosynthesis. Its function is as follows. Cytochrome P450 monooxygenase; part of the gene cluster that mediates the biosynthesis of annullatin D, an alkylated aromatic polyketide with a fused dihydrobenzofuran lactone ring system that exhibits potent agonistic activities toward the cannabinoid receptors. Within the pathway, anuH uses dimethylallyl diphosphate (DMAPP) to prenylate (8S)-annullatin E to produce (8S)-annullatin J. Geranyl and farnesyl diphosphate are not consumed by anuH for prenylation. 2-hydroxymethyl-3-pentylphenol, without the hydroxyl group at the side chain, is also accepted by anuH, but only with low conversion yield. The annullatin backbone 2-hydroxymethyl-3-pentylphenol is assembled from one acetyl-CoA starter unit and 5 malonyl-CoA elongation units by cooperation of the highly reducing polyketide synthase anuA, the short-chain dehydrogenase anuB and the oxidoreductase anuC, before being hydroxylated at the C-5 alkyl chain by the cytochrome P450 monooxygenase anuE to form (8S)-annullatin E. The prenyltransferase anuH subsequently installs one isoprenyl group at the benzene ring to form (8S)-annullatin J. Enzymatic or nonenzymatic dihydro-benzofuran ring formation between the prenyl and the phenolic hydroxyl groups in (8S)-annullatin J results in two diastereomers (2S,9S)-annullatin H and compound 12. The intermediate (2S,9S)-annullatin H is then converted to (2S,9S)-annullatin D by the FAD-linked oxidoreductase anuG-catalyzed five-member lactone ring formation. The isomer 12 acts as a substrate for the short-chain dehydrogenase anuF and is oxidized to (2R)-annullatin F, which is subsequently acetylated by an acetyltransferase leading to (2R)-annullatin G formation. The remaining enzymes identified within the cluster, anuD, anuI and anuJ, seem not to be involved in annullatin biosynthesis. This chain is Prenyltransferase anuH, found in Penicillium roqueforti (strain FM164).